Consider the following 311-residue polypeptide: DNA replication terminus site-binding protein (311 aa).

It belongs to the Tus family.

The protein localises to the cytoplasm. In terms of biological role, trans-acting protein required for termination of DNA replication. Binds to DNA replication terminator sequences (terA to terF) to prevent the passage of replication forks. The termination efficiency will be affected by the affinity of this protein for the terminator sequence. This chain is DNA replication terminus site-binding protein, found in Yersinia pestis.